Here is a 479-residue protein sequence, read N- to C-terminus: Cyclin-dependent kinase F-1 (479 aa).

The Protein kinase domain occupies 21 to 418 (YEIFERVGSG…TMEMLNDKYL (398 aa)). Residues 27–35 (VGSGAYADV) and lysine 50 contribute to the ATP site. Tyrosine 32 carries the post-translational modification Phosphotyrosine. Aspartate 146 functions as the Proton acceptor in the catalytic mechanism. 3 positions are modified to phosphoserine: serine 179, serine 208, and serine 247. The tract at residues 187 to 221 (KLEDKDGETSEPPEVIPDYENSPRQGSDGQEREAM) is disordered. A Phosphothreonine modification is found at threonine 290. The disordered stretch occupies residues 434–479 (PTMSGPDEDSPRKWNDYREMDSDSDFDGFGPMNVKPTSSGFTIEFP). Basic and acidic residues predominate over residues 442–454 (DSPRKWNDYREMD). The span at 468–479 (KPTSSGFTIEFP) shows a compositional bias: polar residues.

This sequence belongs to the protein kinase superfamily. CMGC Ser/Thr protein kinase family. CDC2/CDKX subfamily. Highly expressed in suspension cell culture. Expressed at low levels in all plant organs.

The enzyme catalyses L-seryl-[protein] + ATP = O-phospho-L-seryl-[protein] + ADP + H(+). The catalysed reaction is L-threonyl-[protein] + ATP = O-phospho-L-threonyl-[protein] + ADP + H(+). It carries out the reaction [DNA-directed RNA polymerase] + ATP = phospho-[DNA-directed RNA polymerase] + ADP + H(+). Functionally, CDK-activating kinase that modulates CDKD-2 and CDKD-3 activities by phosphorylation of the T-loop. Activates CDKD-2 C-terminal domain (CTD) kinase activity. Activates CDKA-1 probably by phosphorylation. Possesses a CDK kinase activity independently of association with cyclin CYCH1-1. Phosphorylates the CTD of the large subunit of RNA polymerase II. The polypeptide is Cyclin-dependent kinase F-1 (CDKF-1) (Arabidopsis thaliana (Mouse-ear cress)).